A 622-amino-acid polypeptide reads, in one-letter code: Mitochondrial distribution and morphology protein 34 (622 aa).

Residues 1–195 (MAFNFNWSPL…LPAIIHRLSL (195 aa)) enclose the SMP-LTD domain. Disordered stretches follow at residues 211 to 234 (QVTNPPLEGPGLDPLLNPPEDPVD), 303 to 322 (PSGLVSPMSPPLSRTHSHVA), 355 to 432 (SMGA…IRQP), 445 to 464 (ERNARRGIPAEFGHDIPASR), 482 to 546 (SLQQ…QTHL), and 581 to 622 (KMGG…AYRH). Low complexity predominate over residues 214–225 (NPPLEGPGLDPL). Positions 360–372 (RHSKAHARKRKKR) are enriched in basic residues. Basic and acidic residues predominate over residues 373 to 384 (VVDLRRRPKNTD). The segment covering 388-404 (SVSGESEFTESTSAASV) has biased composition (low complexity). Polar residues-rich tracts occupy residues 482-495 (SLQQQLHPANSKSL) and 522-532 (NASNYTSSGDS). Low complexity-rich tracts occupy residues 533–543 (QQQQQQQQQHQ) and 592–601 (NNKNDNKNNN).

The protein belongs to the MDM34 family. In terms of assembly, component of the ER-mitochondria encounter structure (ERMES) or MDM complex, composed of MMM1, MDM10, MDM12 and MDM34.

The protein resides in the mitochondrion outer membrane. Its function is as follows. Component of the ERMES/MDM complex, which serves as a molecular tether to connect the endoplasmic reticulum (ER) and mitochondria. Components of this complex are involved in the control of mitochondrial shape and protein biogenesis, and function in nonvesicular lipid trafficking between the ER and mitochondria. MDM34 is required for the interaction of the ER-resident membrane protein MMM1 and the outer mitochondrial membrane-resident beta-barrel protein MDM10. The polypeptide is Mitochondrial distribution and morphology protein 34 (Ajellomyces capsulatus (strain G186AR / H82 / ATCC MYA-2454 / RMSCC 2432) (Darling's disease fungus)).